A 188-amino-acid polypeptide reads, in one-letter code: Elongation factor P (188 aa).

K34 carries the post-translational modification N6-(3,6-diaminohexanoyl)-5-hydroxylysine.

It belongs to the elongation factor P family. In terms of processing, may be beta-lysylated on the epsilon-amino group of Lys-34 by the combined action of EpmA and EpmB, and then hydroxylated on the C5 position of the same residue by EpmC (if this protein is present). Lysylation is critical for the stimulatory effect of EF-P on peptide-bond formation. The lysylation moiety may extend toward the peptidyltransferase center and stabilize the terminal 3-CCA end of the tRNA. Hydroxylation of the C5 position on Lys-34 may allow additional potential stabilizing hydrogen-bond interactions with the P-tRNA.

The protein resides in the cytoplasm. It functions in the pathway protein biosynthesis; polypeptide chain elongation. In terms of biological role, involved in peptide bond synthesis. Alleviates ribosome stalling that occurs when 3 or more consecutive Pro residues or the sequence PPG is present in a protein, possibly by augmenting the peptidyl transferase activity of the ribosome. Modification of Lys-34 is required for alleviation. This is Elongation factor P from Yersinia pseudotuberculosis serotype O:1b (strain IP 31758).